The chain runs to 377 residues: MRNEIQNETAQTDQTQGSMFSFFNLFPFLLPMFEVIKMVVASVASVVYLGFAGVTLSGSAVALAVSTPLFIIFSPILLPAIAATTVLAAGLGGKKVAAAPEASPAASPSLSLLGIPESIKPSNIIPESIKPSNIIPEGIKPSNIKDKIKDTIGKVKNKIKAKKEEKSKGKSEDSSKGKGKSKGEDTTTDDDTTTDEDKHGSGAKHGKGESKHGKGESTHGKGGKHGSEGKHGSGGSSMGGGKHGSGGKHETGGKHGSGGKHESGGSPMGGGKHGSEGKHGSGGASMGGGKHGSGGKHESGGSAMGGGKHGSGGKHGSEGKHGGEGSSMGKNSLSKKKKEFHYRGQAMDASSTSESSDGSSDGSSSDGSSHGSGGKHI.

A polar region spans residues M1–K37. 3 helical membrane-spanning segments follow: residues Q16–I36, M38–G58, and L69–A89. Positions M38–N133 are hydrophobic. 3 repeat units span residues I115–I124, I125–I134, and I135–I144. The interval I115–I144 is 3 X 10 AA tandem repeats of I-P-E-[SG]-I-K-P-S-N-[IV]. Residues K158–I377 form a disordered region. Composition is skewed to basic and acidic residues over residues K162 to D185 and D195 to H231. A 2-1 repeat occupies E196 to G202. A 2.1 repeat occupies E196–G202. Residues E196 to G222 are 3 X 6 AA tandem repeats of E-[SD]-[KT]-H-G-[KS]-G. A 2-2; truncated repeat occupies K204–G208. 7 consecutive repeat copies span residues E209–G215, E216–G222, K230–G247, K260–G277, K278–G295, K296–G313, and S355–S359. The segment at K230–G313 is 4 X 18 AA tandem repeats of K-H-E-S-G-G-[SA]-[PSA]-M-G-G-G-K-H-G-S-[GE]-G. The segment covering G232–G244 has biased composition (gly residues). Basic and acidic residues predominate over residues G247–S263. Composition is skewed to gly residues over residues G280–G292 and S302–K314. The span at S350–S369 shows a compositional bias: low complexity. The tract at residues S355 to S368 is 3 X 5 AA tandem repeats of S-S-D-G-S. A 4-2; truncated repeat occupies S360–S363. The 4-3 repeat unit spans residues S364 to S368.

Belongs to the oleosin family. The full-length protein is found in the tapetal lipid bodies of immature anthers, the proteolytically cleaved C-terminal product is found on the coats of pollen grains. No expression is detected in other flower organs, siliques or seedlings.

It is found in the lipid droplet. Its subcellular location is the membrane. In terms of biological role, many of the major pollen coat proteins are derived from endoproteolytic cleavage of oleosin-like proteins. This Brassica napus (Rape) protein is Oleosin-B4.